The sequence spans 99 residues: Ferredoxin, heterocyst (99 aa).

The 2Fe-2S ferredoxin-type domain occupies 4-96 (YQVRLINKKQ…NCTIKTHQEP (93 aa)). [2Fe-2S] cluster-binding residues include cysteine 42, cysteine 47, cysteine 50, and cysteine 80.

Belongs to the 2Fe2S plant-type ferredoxin family. Requires [2Fe-2S] cluster as cofactor.

Functionally, ferredoxins are iron-sulfur proteins that transfer electrons in a wide variety of metabolic reactions. Donates electrons to the nitrogenase. The protein is Ferredoxin, heterocyst (fdxH) of Nostoc sp. (strain PCC 7120 / SAG 25.82 / UTEX 2576).